We begin with the raw amino-acid sequence, 873 residues long: Leucine--tRNA ligase (873 aa).

The 'HIGH' region motif lies at 42-52; sequence PYPSGKLHMGH. The disordered stretch occupies residues 624 to 643; sequence PVEIGGTEKMSKSKNNGVDP. The 'KMSKS' region motif lies at 632–636; that stretch reads KMSKS. An ATP-binding site is contributed by lysine 635.

This sequence belongs to the class-I aminoacyl-tRNA synthetase family.

It localises to the cytoplasm. The catalysed reaction is tRNA(Leu) + L-leucine + ATP = L-leucyl-tRNA(Leu) + AMP + diphosphate. This Pseudomonas paraeruginosa (strain DSM 24068 / PA7) (Pseudomonas aeruginosa (strain PA7)) protein is Leucine--tRNA ligase.